The primary structure comprises 92 residues: Small ribosomal subunit protein bS20 (92 aa).

It belongs to the bacterial ribosomal protein bS20 family.

In terms of biological role, binds directly to 16S ribosomal RNA. The polypeptide is Small ribosomal subunit protein bS20 (Persephonella marina (strain DSM 14350 / EX-H1)).